The following is a 78-amino-acid chain: DNA-directed RNA polymerase subunit Rpo5 (78 aa).

This sequence belongs to the archaeal Rpo5/eukaryotic RPB5 RNA polymerase subunit family. As to quaternary structure, part of the RNA polymerase complex.

Its subcellular location is the cytoplasm. The catalysed reaction is RNA(n) + a ribonucleoside 5'-triphosphate = RNA(n+1) + diphosphate. Its function is as follows. DNA-dependent RNA polymerase (RNAP) catalyzes the transcription of DNA into RNA using the four ribonucleoside triphosphates as substrates. This Methanococcus vannielii (strain ATCC 35089 / DSM 1224 / JCM 13029 / OCM 148 / SB) protein is DNA-directed RNA polymerase subunit Rpo5.